The primary structure comprises 200 residues: dITP/XTP pyrophosphatase (200 aa).

8–13 (TRNAGK) contacts substrate. The Proton acceptor role is filled by Asp-72. Asp-72 contributes to the Mg(2+) binding site. Substrate is bound by residues Ser-73, 155–158 (FGYD), Lys-178, and 183–184 (HR).

The protein belongs to the HAM1 NTPase family. In terms of assembly, homodimer. Mg(2+) serves as cofactor.

It catalyses the reaction XTP + H2O = XMP + diphosphate + H(+). The catalysed reaction is dITP + H2O = dIMP + diphosphate + H(+). It carries out the reaction ITP + H2O = IMP + diphosphate + H(+). Its function is as follows. Pyrophosphatase that catalyzes the hydrolysis of nucleoside triphosphates to their monophosphate derivatives, with a high preference for the non-canonical purine nucleotides XTP (xanthosine triphosphate), dITP (deoxyinosine triphosphate) and ITP. Seems to function as a house-cleaning enzyme that removes non-canonical purine nucleotides from the nucleotide pool, thus preventing their incorporation into DNA/RNA and avoiding chromosomal lesions. This is dITP/XTP pyrophosphatase from Streptomyces coelicolor (strain ATCC BAA-471 / A3(2) / M145).